Reading from the N-terminus, the 186-residue chain is UPF0397 protein LBUL_1584 (186 aa).

A run of 5 helical transmembrane segments spans residues 13–33 (IAAL…ASIP), 46–66 (AFLA…VGFI), 79–99 (TWWN…LYAL), 114–134 (VIFN…LGSV), and 150–170 (QAGL…TILL).

This sequence belongs to the UPF0397 family.

The protein localises to the cell membrane. The protein is UPF0397 protein LBUL_1584 of Lactobacillus delbrueckii subsp. bulgaricus (strain ATCC BAA-365 / Lb-18).